Here is a 445-residue protein sequence, read N- to C-terminus: MDRLHIIGAGLAGSEAAWQAAQAGVPVVLHEMRPRVGTFAHRSGDFAEMVCSNSFRSDDDERNAVGLLHWEMRAAGGLIMATADRHALPAGGALAVDREAFSGAVTAALRAHPLISVAEEEITELPAEGHWIIATGPLTSGALAESIRAVTGAESLAFFDAIAPIVHAETTDIRCLRQSRYDKGETEEERTAYINCPMTRDQYEAFIDALLAAEKTEFHAGETAGYFDGCLPIEVMAERGRETLRHGPMKPVGLTNAHDPATKAYAVVQLRRDNALGTLYNIVGFQTKMKYGAQTAVFKMIPGLEQASFARLGGIHRNTFLNSPTLLDDQMRLRARPNLRFAGQVTGVEGYVESAAMGLLAGRMAAAGILGRSLPPPGPETAMGALVNHITGGAVAKTFQPMNVNFGLFPPLDDARGGRRGRKDRYKGYTDRAKEVFTAWLAAQA.

FAD is bound at residue 8 to 13 (GAGLAG).

This sequence belongs to the MnmG family. TrmFO subfamily. The cofactor is FAD.

The protein resides in the cytoplasm. The enzyme catalyses uridine(54) in tRNA + (6R)-5,10-methylene-5,6,7,8-tetrahydrofolate + NADH + H(+) = 5-methyluridine(54) in tRNA + (6S)-5,6,7,8-tetrahydrofolate + NAD(+). The catalysed reaction is uridine(54) in tRNA + (6R)-5,10-methylene-5,6,7,8-tetrahydrofolate + NADPH + H(+) = 5-methyluridine(54) in tRNA + (6S)-5,6,7,8-tetrahydrofolate + NADP(+). Catalyzes the folate-dependent formation of 5-methyl-uridine at position 54 (M-5-U54) in all tRNAs. The protein is Methylenetetrahydrofolate--tRNA-(uracil-5-)-methyltransferase TrmFO of Rhodobacter capsulatus (strain ATCC BAA-309 / NBRC 16581 / SB1003).